We begin with the raw amino-acid sequence, 446 residues long: Questin oxidase (446 aa).

This sequence belongs to the questin oxidase family.

The catalysed reaction is questin + NADPH + O2 = demethylsulochrin + NADP(+). The protein operates within secondary metabolite biosynthesis. Functionally, questin oxidase; part of the gene cluster that mediates the biosynthesis of geodin, an intermediate in the biosynthesis of other natural products. The pathway begins with the synthesis of atrochrysone thioester by the polyketide synthase (PKS) gedC. The atrochrysone carboxyl ACP thioesterase gedB then breaks the thioester bond and releases the atrochrysone carboxylic acid from gedC. The atrochrysone carboxylic acid is then converted to atrochrysone which is further transformed into emodinanthrone. The next step is performed by the emodinanthrone oxygenase gedH that catalyzes the oxidation of emodinanthrone to emodin. Emodin O-methyltransferase encoded probably by gedA then catalyzes methylation of the 8-hydroxy group of emodin to form questin. Ring cleavage of questin by questin oxidase gedK leads to desmethylsulochrin via several intermediates including questin epoxide. Another methylation step probably catalyzed by methyltransferase gedG leads to the formation of sulochrin which is further converted to dihydrogeodin by the sulochrin halogenase gedL. Finally, the dihydrogeodin oxidase gedJ catalyzes the stereospecific phenol oxidative coupling reaction converting dihydrogeodin to geodin. The chain is Questin oxidase from Aspergillus terreus (strain NIH 2624 / FGSC A1156).